A 554-amino-acid polypeptide reads, in one-letter code: Glucose-6-phosphate isomerase (554 aa).

Glu359 (proton donor) is an active-site residue. Active-site residues include His390 and Lys518.

The protein belongs to the GPI family.

It is found in the cytoplasm. It carries out the reaction alpha-D-glucose 6-phosphate = beta-D-fructose 6-phosphate. It functions in the pathway carbohydrate biosynthesis; gluconeogenesis. Its pathway is carbohydrate degradation; glycolysis; D-glyceraldehyde 3-phosphate and glycerone phosphate from D-glucose: step 2/4. Functionally, catalyzes the reversible isomerization of glucose-6-phosphate to fructose-6-phosphate. The chain is Glucose-6-phosphate isomerase from Ectopseudomonas mendocina (strain ymp) (Pseudomonas mendocina).